We begin with the raw amino-acid sequence, 513 residues long: MGAAAKLAFAVFLISCSSGAILGRSETQECLFFNANWEKDRTNQTGVEPCYGDKDKRRHCFATWKNISGSIEIVKQGCWLDDINCYDRTDCVEKKDSPEVYFCCCEGNMCNEKFSYFPEMEVTQPTSNPVTPKPPYYNILLYSLVPLMLIAGIVICAFWVYRHHKMAYPPVLVPTQDPGPPPPSPLLGLKPLQLLEVKARGRFGCVWKAQLLNEYVAVKIFPIQDKQSWQNEYEVYSLPGMKHENILQFIGAEKRGTSVDVDLWLITAFHEKGSLSDFLKANVVSWNELCHIAETMARGLAYLHEDIPGLKDGHKPAISHRDIKSKNVLLKNNLTACIADFGLALKFEAGKSAGDTHGQVGTRRYMAPEVLEGAINFQRDAFLRIDMYAMGLVLWELASRCTAADGPVDEYMLPFEEEIGQHPSLEDMQEVVVHKKKRPVLRDYWQKHAGMAMLCETIEECWDHDAEARLSAGCVGERITQMQRLTNIITTEDIVTVVTMVTNVDFPPKESSL.

Positions 1-19 are cleaved as a signal peptide; the sequence is MGAAAKLAFAVFLISCSSG. Topologically, residues 20-135 are extracellular; sequence AILGRSETQE…TSNPVTPKPP (116 aa). Intrachain disulfides connect cysteine 30/cysteine 60, cysteine 50/cysteine 78, cysteine 85/cysteine 104, cysteine 91/cysteine 103, and cysteine 105/cysteine 110. N-linked (GlcNAc...) asparagine glycans are attached at residues asparagine 43 and asparagine 66. Residues 136 to 161 traverse the membrane as a helical segment; the sequence is YYNILLYSLVPLMLIAGIVICAFWVY. At 162–513 the chain is on the cytoplasmic side; sequence RHHKMAYPPV…VDFPPKESSL (352 aa). A Protein kinase domain is found at 192-485; the sequence is LQLLEVKARG…GERITQMQRL (294 aa). ATP is bound by residues 198-206 and lysine 219; that span reads KARGRFGCV. Residue aspartate 322 is the Proton acceptor of the active site.

Belongs to the protein kinase superfamily. TKL Ser/Thr protein kinase family. TGFB receptor subfamily. As to quaternary structure, part of a complex consisting of MAGI2/ARIP1, ACVR2A, ACVR1B and SMAD3. Interacts with MAGI2/ARIP1. Interacts with type I receptor ACVR1. Interacts with BMP7. Interacts with TSC22D1/TSC-22. Interacts with activin A/INHBA. Requires Mg(2+) as cofactor. Mn(2+) is required as a cofactor.

The protein localises to the cell membrane. It catalyses the reaction L-threonyl-[receptor-protein] + ATP = O-phospho-L-threonyl-[receptor-protein] + ADP + H(+). The catalysed reaction is L-seryl-[receptor-protein] + ATP = O-phospho-L-seryl-[receptor-protein] + ADP + H(+). On ligand binding, forms a receptor complex consisting of two type II and two type I transmembrane serine/threonine kinases. Type II receptors phosphorylate and activate type I receptors which autophosphorylate, then bind and activate SMAD transcriptional regulators. Receptor for activin A, activin B and inhibin A. Mediates induction of adipogenesis by GDF6. This Homo sapiens (Human) protein is Activin receptor type-2A.